We begin with the raw amino-acid sequence, 509 residues long: Probable cytosol aminopeptidase (509 aa).

Mn(2+)-binding residues include Lys-277 and Asp-282. Lys-289 is an active-site residue. Mn(2+) is bound by residues Asp-300, Asp-359, and Glu-361. The active site involves Arg-363.

This sequence belongs to the peptidase M17 family. Mn(2+) is required as a cofactor.

The protein resides in the cytoplasm. It carries out the reaction Release of an N-terminal amino acid, Xaa-|-Yaa-, in which Xaa is preferably Leu, but may be other amino acids including Pro although not Arg or Lys, and Yaa may be Pro. Amino acid amides and methyl esters are also readily hydrolyzed, but rates on arylamides are exceedingly low.. It catalyses the reaction Release of an N-terminal amino acid, preferentially leucine, but not glutamic or aspartic acids.. In terms of biological role, presumably involved in the processing and regular turnover of intracellular proteins. Catalyzes the removal of unsubstituted N-terminal amino acids from various peptides. The sequence is that of Probable cytosol aminopeptidase from Chloroherpeton thalassium (strain ATCC 35110 / GB-78).